The primary structure comprises 398 residues: Acetate kinase 1 (398 aa).

N9 serves as a coordination point for Mg(2+). Position 16 (K16) interacts with ATP. R89 contributes to the substrate binding site. The Proton donor/acceptor role is filled by D146. ATP-binding positions include 206-210 (HLGNG), 281-283 (DCR), and 329-333 (GIGEN). E384 contacts Mg(2+).

This sequence belongs to the acetokinase family. As to quaternary structure, homodimer. The cofactor is Mg(2+). It depends on Mn(2+) as a cofactor.

The protein localises to the cytoplasm. It carries out the reaction acetate + ATP = acetyl phosphate + ADP. Its pathway is metabolic intermediate biosynthesis; acetyl-CoA biosynthesis; acetyl-CoA from acetate: step 1/2. In terms of biological role, catalyzes the formation of acetyl phosphate from acetate and ATP. Can also catalyze the reverse reaction. The chain is Acetate kinase 1 from Vibrio vulnificus (strain CMCP6).